The chain runs to 204 residues: Elongation factor Ts (204 aa).

The tract at residues 87–90 (TDFV) is involved in Mg(2+) ion dislocation from EF-Tu.

It belongs to the EF-Ts family.

Its subcellular location is the cytoplasm. Functionally, associates with the EF-Tu.GDP complex and induces the exchange of GDP to GTP. It remains bound to the aminoacyl-tRNA.EF-Tu.GTP complex up to the GTP hydrolysis stage on the ribosome. The sequence is that of Elongation factor Ts from Frankia alni (strain DSM 45986 / CECT 9034 / ACN14a).